Here is a 652-residue protein sequence, read N- to C-terminus: Carboxypeptidase Z (652 aa).

Positions 1-18 (MPPPLPLLLLTVLVVAAA) are cleaved as a signal peptide. One can recognise an FZ domain in the interval 27-160 (NPAGECHRPP…TREDEGCYDP (134 aa)). 5 disulfides stabilise this stretch: C43/C109, C51/C102, C93/C129, C118/C157, and C122/C146. Residues 186-502 (SHHSYAQMVR…ESLLNFVETV (317 aa)) enclose the Peptidase M14 domain. H248 and E251 together coordinate Zn(2+). N-linked (GlcNAc...) asparagine glycosylation is present at N281. Residue H380 participates in Zn(2+) binding. Residue E472 is the Proton donor/acceptor of the active site. The interval 595–629 (LRRTGPHDPLGGASSLGEATEPDPLRARRQPSADG) is disordered.

The protein belongs to the peptidase M14 family. Zn(2+) serves as cofactor. In terms of tissue distribution, in placenta, it is present within invasive trophoblasts and in the surrounding extracellular space. Also present in amnion cells, but is not readily apparent in the extracellular matrix of this cell type. Present in normal pituitary gland and neoplastic pituitary gland (especially POMC-, GH- and PRL-producing adenomas) (at protein level). Widely expressed.

The protein resides in the secreted. The protein localises to the extracellular space. It is found in the extracellular matrix. With respect to regulation, inhibited by 2-mercaptomethyl-3-guanidinoethylthiopropanoic acid (MGTA) and guanidinoethylmercaptosuccinic acid (GEMSA). Inhibited by chelating agents such as EDTA and EGTA. In terms of biological role, cleaves substrates with C-terminal arginine residues. Probably modulates the Wnt signaling pathway, by cleaving some undefined protein. May play a role in cleavage during prohormone processing. The chain is Carboxypeptidase Z (CPZ) from Homo sapiens (Human).